A 25-amino-acid polypeptide reads, in one-letter code: Glucomannokinase (25 aa).

Belongs to the ROK (NagC/XylR) family. As to quaternary structure, homodimer.

It carries out the reaction D-glucose + ATP = D-glucose 6-phosphate + ADP + H(+). The catalysed reaction is D-mannose + ATP = D-mannose 6-phosphate + ADP + H(+). Its pathway is carbohydrate degradation; glycolysis; D-glyceraldehyde 3-phosphate and glycerone phosphate from D-glucose: step 1/4. It participates in carbohydrate metabolism; mannose metabolism. With respect to regulation, competitively inhibited by 2-deoxy-glucose. In terms of biological role, the enzyme has great affinity for glucose and mannose. This is Glucomannokinase from Segatella bryantii (Prevotella bryantii).